The sequence spans 574 residues: Potassium-transporting ATPase potassium-binding subunit (574 aa).

Transmembrane regions (helical) follow at residues 7 to 27 (IELG…GTHL), 65 to 85 (IEYA…SYLI), 136 to 156 (FGLA…AAAL), 175 to 195 (LIRI…IILL), 264 to 284 (FVEM…FGLS), 292 to 312 (WSIW…CFIF), 390 to 410 (GLYG…LMIG), 427 to 447 (MAVL…ALAL), 494 to 514 (LLLG…ILAI), and 534 to 554 (GWLF…LNFF).

It belongs to the KdpA family. As to quaternary structure, the system is composed of three essential subunits: KdpA, KdpB and KdpC.

The protein resides in the cell inner membrane. Part of the high-affinity ATP-driven potassium transport (or Kdp) system, which catalyzes the hydrolysis of ATP coupled with the electrogenic transport of potassium into the cytoplasm. This subunit binds the periplasmic potassium ions and delivers the ions to the membrane domain of KdpB through an intramembrane tunnel. In Methylacidiphilum infernorum (isolate V4) (Methylokorus infernorum (strain V4)), this protein is Potassium-transporting ATPase potassium-binding subunit.